We begin with the raw amino-acid sequence, 137 residues long: uncharacterized protein (137 aa).

The N-terminal stretch at 1–19 is a signal peptide; sequence MVAFYGIFLFGTVYLFGLA.

This is an uncharacterized protein from Acanthamoeba polyphaga (Amoeba).